A 340-amino-acid polypeptide reads, in one-letter code: Cell invasion protein SipD (340 aa).

Disordered regions lie at residues 1-26 and 57-76; these read MLNIQNYSASPHPGIVAERPQTPSAS and QAQQTLQSTPPISEENNDER. Residues 291-319 adopt a coiled-coil conformation; that stretch reads FKAQEENLKTTLQTLTQKYSNANSLYDNL.

The protein belongs to the invasin protein D family.

Its subcellular location is the secreted. Required for translocation of effector proteins via the type III secretion system SPI-1, which is essential for an efficient bacterial internalization. Probably acts by modulating the secretion of SipA, SipB, and SipC. The polypeptide is Cell invasion protein SipD (sipD) (Salmonella typhi).